The chain runs to 714 residues: Polyribonucleotide nucleotidyltransferase (714 aa).

2 residues coordinate Mg(2+): Asp-484 and Asp-490. Residues 551-610 (PRIMVINIAPEKVREVIGPGGKVINKIIDETGVKIDTEDDGKITVAGENTESAQRAIDMI) enclose the KH domain. An S1 motif domain is found at 620–688 (GEKYLGRVTK…DQGKMTLSRK (69 aa)). Residues 685-714 (LSRKALLPKPERKEKKNFDKKSEDQNSEDK) are disordered. Positions 693–714 (KPERKEKKNFDKKSEDQNSEDK) are enriched in basic and acidic residues.

This sequence belongs to the polyribonucleotide nucleotidyltransferase family. The cofactor is Mg(2+).

Its subcellular location is the cytoplasm. The catalysed reaction is RNA(n+1) + phosphate = RNA(n) + a ribonucleoside 5'-diphosphate. Its function is as follows. Involved in mRNA degradation. Catalyzes the phosphorolysis of single-stranded polyribonucleotides processively in the 3'- to 5'-direction. The polypeptide is Polyribonucleotide nucleotidyltransferase (Finegoldia magna (strain ATCC 29328 / DSM 20472 / WAL 2508) (Peptostreptococcus magnus)).